A 541-amino-acid chain; its full sequence is Chaperonin GroEL (541 aa).

Residues 29–32, 86–90, glycine 413, 476–478, and aspartate 492 contribute to the ATP site; these read TLGP, DGTTT, and NAA.

This sequence belongs to the chaperonin (HSP60) family. As to quaternary structure, forms a cylinder of 14 subunits composed of two heptameric rings stacked back-to-back. Interacts with the co-chaperonin GroES.

The protein resides in the cytoplasm. It carries out the reaction ATP + H2O + a folded polypeptide = ADP + phosphate + an unfolded polypeptide.. In terms of biological role, together with its co-chaperonin GroES, plays an essential role in assisting protein folding. The GroEL-GroES system forms a nano-cage that allows encapsulation of the non-native substrate proteins and provides a physical environment optimized to promote and accelerate protein folding. This is Chaperonin GroEL from Streptococcus equi subsp. equi (strain 4047).